A 338-amino-acid chain; its full sequence is Tetraacyldisaccharide 4'-kinase (338 aa).

Residue 67-74 (IAGGAGKT) participates in ATP binding.

The protein belongs to the LpxK family.

The enzyme catalyses a lipid A disaccharide + ATP = a lipid IVA + ADP + H(+). Its pathway is glycolipid biosynthesis; lipid IV(A) biosynthesis; lipid IV(A) from (3R)-3-hydroxytetradecanoyl-[acyl-carrier-protein] and UDP-N-acetyl-alpha-D-glucosamine: step 6/6. Its function is as follows. Transfers the gamma-phosphate of ATP to the 4'-position of a tetraacyldisaccharide 1-phosphate intermediate (termed DS-1-P) to form tetraacyldisaccharide 1,4'-bis-phosphate (lipid IVA). This chain is Tetraacyldisaccharide 4'-kinase, found in Acidovorax sp. (strain JS42).